The following is a 270-amino-acid chain: MKMTSKKMKDELMKKLSRPEWDFHYDSEKEVLRIEQKDSKKGINVSLPGVVAKWEVNKEKAIEEVAYYVQEALIAMHKEENSAAKILPVIRSTSFPKQAEEGNPFIMTDHTAETRIYYALDSNKTYRLIDERLLKKLGLTEQQVREMALFNARSLGYEFKQDTVAGNTFYFLNTNDGYDATRILNESLLQSMREKISGDMVVAVPHQDVLIIADIVNEIGYDIIAQMTMKFFAEGHVPITSLSFVYEDGDFEPIFILAKNRKKTDGKEKG.

This sequence belongs to the UPF0354 family.

In Bacillus cereus (strain AH820), this protein is UPF0354 protein BCAH820_4810.